The following is a 356-amino-acid chain: S-adenosylmethionine:tRNA ribosyltransferase-isomerase (356 aa).

It belongs to the QueA family. Monomer.

The protein resides in the cytoplasm. The enzyme catalyses 7-aminomethyl-7-carbaguanosine(34) in tRNA + S-adenosyl-L-methionine = epoxyqueuosine(34) in tRNA + adenine + L-methionine + 2 H(+). Its pathway is tRNA modification; tRNA-queuosine biosynthesis. In terms of biological role, transfers and isomerizes the ribose moiety from AdoMet to the 7-aminomethyl group of 7-deazaguanine (preQ1-tRNA) to give epoxyqueuosine (oQ-tRNA). This chain is S-adenosylmethionine:tRNA ribosyltransferase-isomerase, found in Escherichia coli O81 (strain ED1a).